The following is a 689-amino-acid chain: Glycine--tRNA ligase beta subunit (689 aa).

The protein belongs to the class-II aminoacyl-tRNA synthetase family. In terms of assembly, tetramer of two alpha and two beta subunits.

Its subcellular location is the cytoplasm. The enzyme catalyses tRNA(Gly) + glycine + ATP = glycyl-tRNA(Gly) + AMP + diphosphate. The polypeptide is Glycine--tRNA ligase beta subunit (Oenococcus oeni (strain ATCC BAA-331 / PSU-1)).